We begin with the raw amino-acid sequence, 569 residues long: Formate hydrogenlyase subunit 5 (569 aa).

The propeptide occupies 538–569 (MTVVDVRKKKSKVVPYKELERYSIERKNSPLK).

This sequence belongs to the complex I 49 kDa subunit family. FHL comprises of a formate dehydrogenase, unidentified electron carriers and a hydrogenase (isoenzyme 3). In this non-energy conserving pathway molecular hydrogen and carbodioxide from formate are released. It depends on [4Fe-4S] cluster as a cofactor. Ni(2+) serves as cofactor.

This is Formate hydrogenlyase subunit 5 (hycE) from Escherichia coli (strain K12).